A 366-amino-acid chain; its full sequence is UDP-N-acetylglucosamine--N-acetylmuramyl-(pentapeptide) pyrophosphoryl-undecaprenol N-acetylglucosamine transferase (366 aa).

UDP-N-acetyl-alpha-D-glucosamine contacts are provided by residues 10 to 12, Asn124, Arg166, Ser196, and Gln297; that span reads TGG.

This sequence belongs to the glycosyltransferase 28 family. MurG subfamily.

It is found in the cell membrane. The catalysed reaction is di-trans,octa-cis-undecaprenyl diphospho-N-acetyl-alpha-D-muramoyl-L-alanyl-D-glutamyl-meso-2,6-diaminopimeloyl-D-alanyl-D-alanine + UDP-N-acetyl-alpha-D-glucosamine = di-trans,octa-cis-undecaprenyl diphospho-[N-acetyl-alpha-D-glucosaminyl-(1-&gt;4)]-N-acetyl-alpha-D-muramoyl-L-alanyl-D-glutamyl-meso-2,6-diaminopimeloyl-D-alanyl-D-alanine + UDP + H(+). It functions in the pathway cell wall biogenesis; peptidoglycan biosynthesis. Its function is as follows. Cell wall formation. Catalyzes the transfer of a GlcNAc subunit on undecaprenyl-pyrophosphoryl-MurNAc-pentapeptide (lipid intermediate I) to form undecaprenyl-pyrophosphoryl-MurNAc-(pentapeptide)GlcNAc (lipid intermediate II). This chain is UDP-N-acetylglucosamine--N-acetylmuramyl-(pentapeptide) pyrophosphoryl-undecaprenol N-acetylglucosamine transferase, found in Alkaliphilus metalliredigens (strain QYMF).